A 185-amino-acid polypeptide reads, in one-letter code: Putative 3-methyladenine DNA glycosylase (185 aa).

This sequence belongs to the DNA glycosylase MPG family.

This is Putative 3-methyladenine DNA glycosylase from Rhizobium meliloti (strain 1021) (Ensifer meliloti).